An 872-amino-acid chain; its full sequence is Alanine--tRNA ligase (872 aa).

Residues His-567, His-571, Cys-669, and His-673 each contribute to the Zn(2+) site.

This sequence belongs to the class-II aminoacyl-tRNA synthetase family. Requires Zn(2+) as cofactor.

Its subcellular location is the cytoplasm. It carries out the reaction tRNA(Ala) + L-alanine + ATP = L-alanyl-tRNA(Ala) + AMP + diphosphate. In terms of biological role, catalyzes the attachment of alanine to tRNA(Ala) in a two-step reaction: alanine is first activated by ATP to form Ala-AMP and then transferred to the acceptor end of tRNA(Ala). Also edits incorrectly charged Ser-tRNA(Ala) and Gly-tRNA(Ala) via its editing domain. The chain is Alanine--tRNA ligase from Streptococcus mutans serotype c (strain ATCC 700610 / UA159).